Reading from the N-terminus, the 339-residue chain is Annexin A2 (339 aa).

Serine 2 carries the N-acetylserine modification. Positions 2 to 24 (STVHEILCKLSLEGDHSTPPSAY) are S100A10-binding site. A Phosphotyrosine; by SRC modification is found at tyrosine 24. Serine 26 carries the phosphoserine; by PKC modification. Annexin repeat units lie at residues 33-104 (FDAE…GLLK) and 105-176 (TPAQ…ALAK). Residue lysine 49 is modified to N6-acetyllysine; alternate. A Glycyl lysine isopeptide (Lys-Gly) (interchain with G-Cter in SUMO1); alternate cross-link involves residue lysine 49. Lysine 49 is covalently cross-linked (Glycyl lysine isopeptide (Lys-Gly) (interchain with G-Cter in SUMO2); alternate). Lysine 152 carries the post-translational modification N6-acetyllysine. Serine 184 bears the Phosphoserine mark. Annexin repeat units lie at residues 189–261 (ELID…NLVQ) and 265–336 (NKPL…YLCG). Tyrosine 199 carries the phosphotyrosine modification. N6-acetyllysine is present on lysine 227.

The protein belongs to the annexin family. In terms of assembly, heterotetramer containing 2 light chains of S100A10/p11 and 2 heavy chains of ANXA2/p36. Interacts with ATP1B1. Interacts with DYSF. Interacts with COCH. Interacts (via repeat Annexin 1) with PCSK9 (via the C-terminal domain); the interaction inhibits the degradation of LDLR. Interacts with CEACAM1 (via the cytoplasmic domain); this interaction is regulated by phosphorylation of CEACAM1. Interacts with APPL2 and APPL1; targets APPL2 to endosomes and acting in parallel to RAB5A. Interacts with S100A4. May interact with UBAP2. Interacts with PLEKHG4B; this interaction is required for PLEKHG4B localization to cell-cell adhesions. In terms of processing, ISGylated.

The protein localises to the secreted. It localises to the extracellular space. The protein resides in the extracellular matrix. It is found in the basement membrane. Functionally, calcium-regulated membrane-binding protein whose affinity for calcium is greatly enhanced by anionic phospholipids. It binds two calcium ions with high affinity. May be involved in heat-stress response. Inhibits PCSK9-enhanced LDLR degradation, probably reduces PCSK9 protein levels via a translational mechanism but also competes with LDLR for binding with PCSK9. Binds to endosomes damaged by phagocytosis of particulate wear debris and participates in endosomal membrane stabilization, thereby limiting NLRP3 inflammasome activation. Required for endothelial cell surface plasmin generation and may support fibrinolytic surveillance and neoangiogenesis. This Canis lupus familiaris (Dog) protein is Annexin A2 (ANXA2).